The primary structure comprises 299 residues: F-actin-capping protein subunit alpha-3 (299 aa).

Position 290 is a phosphoserine (S290).

It belongs to the F-actin-capping protein alpha subunit family. In terms of assembly, component of the F-actin capping complex, composed of a heterodimer of an alpha and a beta subunit. Component of the WASH complex, composed of F-actin-capping protein subunit alpha (CAPZA1, CAPZA2 or CAPZA3), F-actin-capping protein subunit beta (CAPZB), WASHC1, WASHC2, WASHC3, WASHC4 and WASHC5.

Its function is as follows. F-actin-capping proteins bind in a Ca(2+)-independent manner to the fast growing ends of actin filaments (barbed end) thereby blocking the exchange of subunits at these ends. Unlike other capping proteins (such as gelsolin and severin), these proteins do not sever actin filaments. May play a role in the morphogenesis of spermatid. In Macaca fascicularis (Crab-eating macaque), this protein is F-actin-capping protein subunit alpha-3 (CAPZA3).